The primary structure comprises 137 residues: Putative pre-16S rRNA nuclease (137 aa).

Belongs to the YqgF nuclease family.

Its subcellular location is the cytoplasm. Its function is as follows. Could be a nuclease involved in processing of the 5'-end of pre-16S rRNA. In Oceanobacillus iheyensis (strain DSM 14371 / CIP 107618 / JCM 11309 / KCTC 3954 / HTE831), this protein is Putative pre-16S rRNA nuclease.